We begin with the raw amino-acid sequence, 676 residues long: Potassium-transporting ATPase ATP-binding subunit (676 aa).

Helical transmembrane passes span 24-44 (NPVM…CFYP), 45-65 (MGIP…TLLF), 212-232 (IFLI…VPFT), and 246-266 (SLVI…GALI). Residue aspartate 302 is the 4-aspartylphosphate intermediate of the active site. ATP contacts are provided by residues aspartate 339, glutamate 343, 372–379 (FSAKTRMS), and lysine 390. Residues aspartate 513 and aspartate 517 each coordinate Mg(2+). Helical transmembrane passes span 573–593 (FSIA…FYSI), 611–631 (AILS…PLAL), and 656–676 (GIIA…LIIL).

The protein belongs to the cation transport ATPase (P-type) (TC 3.A.3) family. Type IA subfamily. As to quaternary structure, the system is composed of three essential subunits: KdpA, KdpB and KdpC.

It is found in the cell membrane. It catalyses the reaction K(+)(out) + ATP + H2O = K(+)(in) + ADP + phosphate + H(+). In terms of biological role, part of the high-affinity ATP-driven potassium transport (or Kdp) system, which catalyzes the hydrolysis of ATP coupled with the electrogenic transport of potassium into the cytoplasm. This subunit is responsible for energy coupling to the transport system and for the release of the potassium ions to the cytoplasm. In Enterococcus faecalis (strain ATCC 700802 / V583), this protein is Potassium-transporting ATPase ATP-binding subunit.